The primary structure comprises 1001 residues: Phosphatidylinositol 4,5-bisphosphate 5-phosphatase A (1001 aa).

Polar residues predominate over residues 1 to 12; that stretch reads MEGQSRSGSAKS. 2 disordered regions span residues 1–130 and 144–412; these read MEGQ…VASV and SASA…QPTC. The RSXSXX motif 1 motif lies at 6–11; that stretch reads RSGSAK. Positions 13-28 are enriched in low complexity; sequence GTRTGLGPLPGTHGAL. Residues 29-42 are compositionally biased toward polar residues; the sequence is QTGTPSKKVNSSFQ. At arginine 56 the chain carries Asymmetric dimethylarginine; alternate. Arginine 56 carries the omega-N-methylarginine; alternate modification. Arginine 65 carries the omega-N-methylarginine modification. An Asymmetric dimethylarginine modification is found at arginine 76. Arginine 83 is subject to Asymmetric dimethylarginine; alternate. The residue at position 83 (arginine 83) is an Omega-N-methylarginine; alternate. The span at 161 to 174 shows a compositional bias: polar residues; the sequence is SPTSRDQKQLSPTS. Serine 171 is modified (phosphoserine). The span at 180-196 shows a compositional bias: low complexity; sequence ALATSGLSLALASQEQP. A compositionally biased stretch (pro residues) spans 197-210; sequence PQSPSSPSPVPSPV. A compositionally biased stretch (basic and acidic residues) spans 284 to 294; that stretch reads ARPEAPRHSPE. Phosphoserine occurs at positions 292 and 325. A compositionally biased stretch (pro residues) spans 338–348; it reads VPPPLPKPPRS. Positions 346-351 match the SH3-binding motif; sequence PRSPSR. 2 stretches are compositionally biased toward low complexity: residues 349–361 and 394–411; these read PSRS…NRSP and SPVA…AQPT. An RSXSXX motif 2 motif is present at residues 351–356; the sequence is RSPSRS. The interval 420–723 is catalytic; sequence ITVVTWNVGT…SDHKPVAARF (304 aa). The tract at residues 724–835 is required for ruffle localization; that stretch reads LLQFAFRDDV…IGVTEPFQIS (112 aa). Residues 837–1001 form a disordered region; that stretch reads PTSESASSST…LGLEDGGLGP (165 aa). The span at 838 to 853 shows a compositional bias: low complexity; it reads TSESASSSTDSSGTSS. Short sequence motifs (RSXSXX motif) lie at residues 869–874 and 880–885; these read RSPSPG and RSRSPG. Serine 898 is modified (phosphoserine). 2 stretches are compositionally biased toward low complexity: residues 905–917 and 925–936; these read SRSP…QLPR and SSGSRGSSEEGP. The RSXSXX motif 5 signature appears at 906–911; it reads RSPSPQ. Residues 937–949 are compositionally biased toward pro residues; it reads SGPPGPWAFPPAV. Serine 985 carries the post-translational modification Phosphoserine.

The protein belongs to the inositol 1,4,5-trisphosphate 5-phosphatase type II family. Phosphorylated on Ser/Thr residues. As to expression, expressed in heart, brain, kidney, stomach, small intestine and lung. Not expressed in spleen, thymus, skeletal muscle, testis and skin.

It is found in the cytoplasm. It carries out the reaction 1D-myo-inositol 1,4,5-trisphosphate + H2O = 1D-myo-inositol 1,4-bisphosphate + phosphate. It catalyses the reaction 1D-myo-inositol 1,3,4,5-tetrakisphosphate + H2O = 1D-myo-inositol 1,3,4-trisphosphate + phosphate. The enzyme catalyses a 1,2-diacyl-sn-glycero-3-phospho-(1D-myo-inositol-4,5-bisphosphate) + H2O = a 1,2-diacyl-sn-glycero-3-phospho-(1D-myo-inositol 4-phosphate) + phosphate. Functionally, inositol 5-phosphatase, which converts inositol 1,4,5-trisphosphate to inositol 1,4-bisphosphate. Also converts phosphatidylinositol 4,5-bisphosphate to phosphatidylinositol 4-phosphate and inositol 1,3,4,5-tetrakisphosphate to inositol 1,3,4-trisphosphate in vitro. May be involved in modulation of the function of inositol and phosphatidylinositol polyphosphate-binding proteins that are present at membranes ruffles. The chain is Phosphatidylinositol 4,5-bisphosphate 5-phosphatase A (Inpp5j) from Rattus norvegicus (Rat).